Reading from the N-terminus, the 64-residue chain is Large ribosomal subunit protein bL35 (64 aa).

Basic residues predominate over residues 22-31 (GKVKHGHAYR). The segment at 22-64 (GKVKHGHAYRSHLAQSKTTKQKRQSRKSTLMNNSDFKRLKKLI) is disordered.

This sequence belongs to the bacterial ribosomal protein bL35 family.

In Mesomycoplasma hyopneumoniae (strain 232) (Mycoplasma hyopneumoniae), this protein is Large ribosomal subunit protein bL35.